The primary structure comprises 88 residues: uncharacterized protein (88 aa).

In terms of tissue distribution, expressed in a wide variety of tissues.

This is an uncharacterized protein from Homo sapiens (Human).